A 374-amino-acid polypeptide reads, in one-letter code: Queuine tRNA-ribosyltransferase (374 aa).

Catalysis depends on aspartate 89, which acts as the Proton acceptor. Substrate contacts are provided by residues 89–93 (DSGGF), aspartate 143, glutamine 185, and glycine 212. The interval 243 to 249 (GVGKPED) is RNA binding. Catalysis depends on aspartate 262, which acts as the Nucleophile. Positions 267–271 (TRNAR) are RNA binding; important for wobble base 34 recognition. Positions 300, 302, 305, and 331 each coordinate Zn(2+).

Belongs to the queuine tRNA-ribosyltransferase family. Homodimer. Within each dimer, one monomer is responsible for RNA recognition and catalysis, while the other monomer binds to the replacement base PreQ1. Requires Zn(2+) as cofactor.

It catalyses the reaction 7-aminomethyl-7-carbaguanine + guanosine(34) in tRNA = 7-aminomethyl-7-carbaguanosine(34) in tRNA + guanine. Its pathway is tRNA modification; tRNA-queuosine biosynthesis. Its function is as follows. Catalyzes the base-exchange of a guanine (G) residue with the queuine precursor 7-aminomethyl-7-deazaguanine (PreQ1) at position 34 (anticodon wobble position) in tRNAs with GU(N) anticodons (tRNA-Asp, -Asn, -His and -Tyr). Catalysis occurs through a double-displacement mechanism. The nucleophile active site attacks the C1' of nucleotide 34 to detach the guanine base from the RNA, forming a covalent enzyme-RNA intermediate. The proton acceptor active site deprotonates the incoming PreQ1, allowing a nucleophilic attack on the C1' of the ribose to form the product. After dissociation, two additional enzymatic reactions on the tRNA convert PreQ1 to queuine (Q), resulting in the hypermodified nucleoside queuosine (7-(((4,5-cis-dihydroxy-2-cyclopenten-1-yl)amino)methyl)-7-deazaguanosine). In Saccharophagus degradans (strain 2-40 / ATCC 43961 / DSM 17024), this protein is Queuine tRNA-ribosyltransferase.